A 182-amino-acid polypeptide reads, in one-letter code: ATP synthase subunit delta (182 aa).

It belongs to the ATPase delta chain family. In terms of assembly, F-type ATPases have 2 components, F(1) - the catalytic core - and F(0) - the membrane proton channel. F(1) has five subunits: alpha(3), beta(3), gamma(1), delta(1), epsilon(1). F(0) has three main subunits: a(1), b(2) and c(10-14). The alpha and beta chains form an alternating ring which encloses part of the gamma chain. F(1) is attached to F(0) by a central stalk formed by the gamma and epsilon chains, while a peripheral stalk is formed by the delta and b chains.

Its subcellular location is the cell membrane. With respect to regulation, increases 2-fold following exposure to low pH. F(1)F(0) ATP synthase produces ATP from ADP in the presence of a proton or sodium gradient. F-type ATPases consist of two structural domains, F(1) containing the extramembraneous catalytic core and F(0) containing the membrane proton channel, linked together by a central stalk and a peripheral stalk. During catalysis, ATP synthesis in the catalytic domain of F(1) is coupled via a rotary mechanism of the central stalk subunits to proton translocation. Its function is as follows. This protein is part of the stalk that links CF(0) to CF(1). It either transmits conformational changes from CF(0) to CF(1) or is implicated in proton conduction. This chain is ATP synthase subunit delta, found in Lactobacillus acidophilus (strain ATCC 700396 / NCK56 / N2 / NCFM).